The primary structure comprises 207 residues: uncharacterized protein (207 aa).

This is an uncharacterized protein from Methanocaldococcus jannaschii (strain ATCC 43067 / DSM 2661 / JAL-1 / JCM 10045 / NBRC 100440) (Methanococcus jannaschii).